The chain runs to 1088 residues: RNA-directed RNA polymerase (1088 aa).

Residues 501 to 687 (LSYGDVTRFL…AKRYIAGGKI (187 aa)) enclose the RdRp catalytic domain.

The protein belongs to the reoviridae RNA-directed RNA polymerase family. In terms of assembly, interacts with VP3 (Potential). Interacts with VP2; this interaction activates VP1. Interacts with NSP5; this interaction is probably necessary for the formation of functional virus factories. Interacts with NSP2; this interaction is weak. Mg(2+) serves as cofactor.

The protein resides in the virion. It carries out the reaction RNA(n) + a ribonucleoside 5'-triphosphate = RNA(n+1) + diphosphate. RNA-directed RNA polymerase that is involved in both transcription and genome replication. Together with VP3 capping enzyme, forms an enzyme complex positioned near the channels situated at each of the five-fold vertices of the core. Following infection, the outermost layer of the virus is lost, leaving a double-layered particle (DLP) made up of the core and VP6 shell. VP1 then catalyzes the transcription of fully conservative plus-strand genomic RNAs that are extruded through the DLP's channels into the cytoplasm where they function as mRNAs for translation of viral proteins. One copy of each of the viral (+)RNAs is also recruited during core assembly, together with newly synthesized polymerase complexes and VP2. The polymerase of these novo-formed particles catalyzes the synthesis of complementary minus-strands leading to dsRNA formation. To do so, the polymerase specifically recognizes and binds 4 bases 5'-UGUG-3' in the conserved 3'-sequence of plus-strand RNA templates. VP2 presumably activates the autoinhibited VP1-RNA complex to coordinate packaging and genome replication. Once dsRNA synthesis is complete, the polymerase switches to the transcriptional mode, thus providing secondary transcription. The polypeptide is RNA-directed RNA polymerase (Homo sapiens (Human)).